We begin with the raw amino-acid sequence, 193 residues long: MNAIPYVVEQTKLGERSYDIYSRLLKDRIIIIGSEINDQVASSVVAQLLFLEAEDAEKDIFLYINSPGGSTXAGFAILDXMNLIXPEVQTLCMGLAASFGALLLLAGAKGKRFALPNSEIMIHQPLGGVKGQATEIEITAKRILKLKHDINKIIADRTGQPIEKIAHDTERDYFMTAEEAKEYGIVDGVVEKK.

Catalysis depends on S98, which acts as the Nucleophile. H123 is an active-site residue.

This sequence belongs to the peptidase S14 family. Fourteen ClpP subunits assemble into 2 heptameric rings which stack back to back to give a disk-like structure with a central cavity, resembling the structure of eukaryotic proteasomes.

It is found in the cytoplasm. The catalysed reaction is Hydrolysis of proteins to small peptides in the presence of ATP and magnesium. alpha-casein is the usual test substrate. In the absence of ATP, only oligopeptides shorter than five residues are hydrolyzed (such as succinyl-Leu-Tyr-|-NHMec, and Leu-Tyr-Leu-|-Tyr-Trp, in which cleavage of the -Tyr-|-Leu- and -Tyr-|-Trp bonds also occurs).. In terms of biological role, cleaves peptides in various proteins in a process that requires ATP hydrolysis. Has a chymotrypsin-like activity. Plays a major role in the degradation of misfolded proteins. This chain is ATP-dependent Clp protease proteolytic subunit 1, found in Bacillus cereus (strain ATCC 10987 / NRS 248).